The following is a 308-amino-acid chain: Glutaminase (308 aa).

Residues serine 66, asparagine 117, glutamate 161, asparagine 168, tyrosine 192, tyrosine 244, and valine 262 each coordinate substrate.

The protein belongs to the glutaminase family. As to quaternary structure, homotetramer.

It catalyses the reaction L-glutamine + H2O = L-glutamate + NH4(+). The sequence is that of Glutaminase from Yersinia pestis bv. Antiqua (strain Nepal516).